The primary structure comprises 951 residues: Protein translocase subunit SecA 1 (951 aa).

ATP-binding positions include Gln87, 105–109 (GEGKT), and Asp525. The interval 911–942 (PVVSADRSSRDPGNPASWGKVGRNEDCPCGSG) is disordered. The Zn(2+) site is built by Cys937, Cys939, Cys948, and His949.

This sequence belongs to the SecA family. As to quaternary structure, monomer and homodimer. Part of the essential Sec protein translocation apparatus which comprises SecA, SecYEG and auxiliary proteins SecDF-YajC and YidC. Requires Zn(2+) as cofactor.

The protein resides in the cell inner membrane. The protein localises to the cytoplasm. The catalysed reaction is ATP + H2O + cellular proteinSide 1 = ADP + phosphate + cellular proteinSide 2.. Part of the Sec protein translocase complex. Interacts with the SecYEG preprotein conducting channel. Has a central role in coupling the hydrolysis of ATP to the transfer of proteins into and across the cell membrane, serving both as a receptor for the preprotein-SecB complex and as an ATP-driven molecular motor driving the stepwise translocation of polypeptide chains across the membrane. This is Protein translocase subunit SecA 1 from Nitrobacter hamburgensis (strain DSM 10229 / NCIMB 13809 / X14).